Consider the following 554-residue polypeptide: Phospholipase B-like protein E (554 aa).

An N-terminal signal peptide occupies residues 1–19 (MKLFILLIVIVFLISNSYS). Asn113, Asn140, Asn231, Asn302, Asn340, and Asn546 each carry an N-linked (GlcNAc...) asparagine glycan.

Belongs to the phospholipase B-like family.

The protein resides in the secreted. Its function is as follows. Probable phospholipase. The protein is Phospholipase B-like protein E (plbE) of Dictyostelium discoideum (Social amoeba).